Here is a 134-residue protein sequence, read N- to C-terminus: Flagellar basal-body rod protein FlgC (134 aa).

It belongs to the flagella basal body rod proteins family. The basal body constitutes a major portion of the flagellar organelle and consists of four rings (L,P,S, and M) mounted on a central rod. The rod consists of about 26 subunits of FlgG in the distal portion, and FlgB, FlgC and FlgF are thought to build up the proximal portion of the rod with about 6 subunits each.

The protein localises to the bacterial flagellum basal body. The protein is Flagellar basal-body rod protein FlgC (flgC) of Escherichia coli O157:H7.